The following is a 748-amino-acid chain: MLGTLRAMEGEDVEDDQLLQKLRASRRRFQRRMQRLIEKYNQPFEDTPVVQMATLTYETPQGLRIWGGRLIKERNEGEIQDSSMKPADRTDGSVQAAAWGPELPSHRTVLGADSKSGEVDATSDQEESVAWALAPAVPQSPLKNELRRKYLTQVDILLQGAEYFECAGNRAGRDVRVTPLPSLASPAVPAPGYCSRISRKSPGDPAKPASSPREWDPLHPSSTDMALVPRNDSLSLQETSSSSFLSSQPFEDDDICNVTISDLYAGMLHSMSRLLSTKPSSIISTKTFIMQNWNSRRRHRYKSRMNKTYCKGARRSQRSSKENFIPCSEPVKGTGALRDCKNVLDVSCRKTGLKLEKAFLEVNRPQIHKLDPSWKERKVTPSKYSSLIYFDSSATYNLDEENRFRTLKWLISPVKIVSRPTIRQGHGENRQREIEIRFDQLHREYCLSPRNQPRRMCLPDSWAMNMYRGGPASPGGLQGLETRRLSLPSSKAKAKSLSEAFENLGKRSLEAGRCLPKSDSSSSLPKTNPTHSATRPQQTSDLHVQGNSSGIFRKSVSPSKTLSVPDKEVPGHGRNRYDEIKEEFDKLHQKYCLKSPGQMTVPLCIGVSTDKASMEVRYQTEGFLGKLNPDPHFQGFQKLPSSPLGCRKSLLGSTAIEAPSSTCVARAITRDGTRDHQFPAKRPRLSEPQGSGRQGNSLGASDGVDNTVRPGDQGSSSQPNSEERGENTSYRMEEKSDFMLEKLETKSV.

Serine 123, serine 140, serine 185, serine 201, and serine 211 each carry phosphoserine. A disordered region spans residues 191-226 (PGYCSRISRKSPGDPAKPASSPREWDPLHPSSTDMA). Lysine 354 participates in a covalent cross-link: Glycyl lysine isopeptide (Lys-Gly) (interchain with G-Cter in SUMO2). Serine 412, serine 448, and serine 473 each carry phosphoserine. Serine 486 carries the phosphoserine; by PKB/AKT1 modification. Serine 496 carries the post-translational modification Phosphoserine. The segment at 512–574 (GRCLPKSDSS…PDKEVPGHGR (63 aa)) is disordered. The span at 524 to 562 (LPKTNPTHSATRPQQTSDLHVQGNSSGIFRKSVSPSKTL) shows a compositional bias: polar residues. Basic and acidic residues predominate over residues 565–574 (PDKEVPGHGR). Residues lysine 581 and lysine 586 each participate in a glycyl lysine isopeptide (Lys-Gly) (interchain with G-Cter in SUMO2) cross-link. 2 positions are modified to phosphoserine: serine 595 and serine 642. Residues 670–748 (RDGTRDHQFP…MLEKLETKSV (79 aa)) are disordered. The span at 688–699 (PQGSGRQGNSLG) shows a compositional bias: polar residues. Over residues 721–748 (SEERGENTSYRMEEKSDFMLEKLETKSV) the composition is skewed to basic and acidic residues.

Interacts with CENPA (via CATD domain); the interaction is direct and specific for CENPA since it does not interact with H3.1- or H3.3-containing nucleosomes. Heterotrimer composed of HJURP, CENPA and histone H4, where HJURP interacts with the dimer formed by CENPA and histone H4 and prevents tetramerization of CENPA and H4. Identified in a centromere complex containing histones H2A, H2B and H4, and at least CENPA, CENPB, CENPC, CENPT, CENPN, HJURP, SUPT16H, SSRP1 and RSF1. Interacts with 14-3-3 family members in a phosphorylation-dependent manner. Interacts with MSH5 and NBN. According to PubMed:17256767, highly expressed in the thymus with lower levels in the placenta, small intestine, liver, skeletal muscle, and colon. According to PubMed:17823411, highly expressed in testis, and at a relatively lower level in thymus and bone marrow. Significantly overexpressed in many lung cancer samples, compared with normal lung.

It is found in the nucleus. Its subcellular location is the nucleolus. The protein resides in the chromosome. The protein localises to the centromere. Functionally, centromeric protein that plays a central role in the incorporation and maintenance of histone H3-like variant CENPA at centromeres. Acts as a specific chaperone for CENPA and is required for the incorporation of newly synthesized CENPA molecules into nucleosomes at replicated centromeres. Prevents CENPA-H4 tetramerization and prevents premature DNA binding by the CENPA-H4 tetramer. Directly binds Holliday junctions. The sequence is that of Holliday junction recognition protein (HJURP) from Homo sapiens (Human).